A 776-amino-acid chain; its full sequence is Protein SEY1 (776 aa).

Residues 1 to 681 (MADRSAIQLI…KRSIITTRTH (681 aa)) are Cytoplasmic-facing. One can recognise a GB1/RHD3-type G domain in the interval 34–263 (GLDYHVISVF…TENYYFKPQY (230 aa)). 44–51 (GSQSSGKS) lines the GTP pocket. Residues 682 to 702 (IPPWIYVLLAVLGWNEFVAVI) form a helical membrane-spanning segment. Residues 703–705 (RNP) are Lumenal-facing. Residues 706-726 (LFVTLTLILGATFFVIHKFGL) traverse the membrane as a helical segment. At 727-776 (WGPVVNVVQSAVGETRTAIKDKLRQFVVEDHEVKESFEMKDFSKNEQKEK) the chain is on the cytoplasmic side.

It belongs to the TRAFAC class dynamin-like GTPase superfamily. GB1/RHD3 GTPase family. RHD3 subfamily. Interacts with RTN1 and YOP1; GTP binding is not required for these interactions.

It localises to the endoplasmic reticulum membrane. In terms of biological role, cooperates with the reticulon proteins RTN1 and RTN2 and the tubule-shaping DP1 family protein YOP1 to generate and maintain the structure of the tubular endoplasmic reticulum network. Has GTPase activity, which is required for its function in ER organization. The chain is Protein SEY1 from Saccharomyces cerevisiae (strain AWRI1631) (Baker's yeast).